The following is a 600-amino-acid chain: MAVSTQQLAEELQIFGLDCEDSLLEKLAELCTLYRQTEERMVSELIAFCTSAGKSCLTGEILSSFEHEVLNKKLSKACHSASKDNRHAGARDIVSIQELIEAEEEEETLLSAYTTPSKGPHKRVSSTPETPLTKRSISTRSPHQLLSPSSFSPSATPSQKYSSRTNRGEVVTTFGSAQGVSWSGRGGSGSISLKVMGYPEPLTSSYKTMFQQLPDIREVLTCKIEELGSELKEHYKIEAFTPLLVPAQEPVILLGQIGCDSNGRLNSKSVILEGDREHSSGAQIPVDVSELKDYSLFPGQVVIMEGFNTTGRRLTATKLYEGVPLPFYQPTEEEGDFEQTMVLVACGPYTTSDSITYDPLLDLISTINHDRPDVCILFGPFLDAKHEQVENCKLTSPFEDIFKQCLRTVIEGTRSSGSHLVFVPSLRDVHHEPVYPQPPFTFSELPREDKKRVQFVSEPCNLSINGVMFGLTSTDLLFHIGAEEICSSSGTSDRFSRILKHILTQRSYYPLYPPHEDMAIDYENFYTYAQLPVTPDVFIVPSELRYFVKDIFGCVCMNPGRLTKGQVGGTFGRLYLRRQPKGTDSEGRQGLSVAAQVVRI.

The segment at 112–167 (AYTTPSKGPHKRVSSTPETPLTKRSISTRSPHQLLSPSSFSPSATPSQKYSSRTNR) is disordered. Positions 125 to 140 (SSTPETPLTKRSISTR) are enriched in polar residues. Ser-126 is modified (phosphoserine). 2 positions are modified to phosphothreonine: Thr-127 and Thr-130. Ser-141, Ser-147, Ser-152, and Ser-154 each carry phosphoserine. Positions 141–158 (SPHQLLSPSSFSPSATPS) are enriched in low complexity.

It belongs to the DNA polymerase alpha subunit B family. Component of the alpha DNA polymerase complex (also known as the alpha DNA polymerase-primase complex) consisting of four subunits: the catalytic subunit POLA1, the regulatory subunit POLA2, and the primase complex subunits PRIM1 and PRIM2 respectively. Within the complex, POLA1 directly interacts with PRIM2. Phosphorylated in a cell cycle-dependent manner, in G2/M phase.

It is found in the nucleus. In terms of biological role, accessory subunit of the DNA polymerase alpha complex (also known as the alpha DNA polymerase-primase complex) which plays an essential role in the initiation of DNA synthesis. During the S phase of the cell cycle, the DNA polymerase alpha complex (composed of a catalytic subunit POLA1, an accessory subunit POLA2 and two primase subunits, the catalytic subunit PRIM1 and the regulatory subunit PRIM2) is recruited to DNA at the replicative forks via direct interactions with MCM10 and WDHD1. The primase subunit of the polymerase alpha complex initiates DNA synthesis by oligomerising short RNA primers on both leading and lagging strands. These primers are initially extended by the polymerase alpha catalytic subunit and subsequently transferred to polymerase delta and polymerase epsilon for processive synthesis on the lagging and leading strand, respectively. The chain is DNA polymerase alpha subunit B (Pola2) from Rattus norvegicus (Rat).